The chain runs to 387 residues: Probable serine/threonine-protein kinase RIO1 homolog (387 aa).

The 347-residue stretch at 41–387 folds into the Protein kinase domain; the sequence is VNLQGSLCTG…RYIGMKKRKN (347 aa). Lys91 is an ATP binding site. Residue Asp204 is the Proton acceptor of the active site. Asn209 and Asp221 together coordinate Mg(2+). Asp221 acts as the 4-aspartylphosphate intermediate in catalysis. A disordered region spans residues 309-372; sequence EFGSTTDSDL…RASRISKKEK (64 aa). The segment covering 312–321 has biased composition (low complexity); the sequence is STTDSDLSST. A compositionally biased stretch (basic residues) spans 361–372; sequence IRRASRISKKEK.

The protein belongs to the protein kinase superfamily. RIO-type Ser/Thr kinase family. The cofactor is Mg(2+).

Its subcellular location is the cytoplasm. The catalysed reaction is L-seryl-[protein] + ATP = O-phospho-L-seryl-[protein] + ADP + H(+). It carries out the reaction L-threonyl-[protein] + ATP = O-phospho-L-threonyl-[protein] + ADP + H(+). The enzyme catalyses ATP + H2O = ADP + phosphate + H(+). Functionally, required for the final endonucleolytic cleavage at site D converting 20S pre-rRNA into the mature 18S rRNA. Required for the final steps of cytoplasmic maturation of the 40S ribosomal subunit. Despite the protein kinase domain is proposed to act predominantly as an ATPase. Has a role in the cell cycle where it is required for entrance into S-phase and in the control of the onset of anaphase. Appears to also be involved in the maintenance of chromosome stability and correct mitotic segregation. In Encephalitozoon cuniculi (strain GB-M1) (Microsporidian parasite), this protein is Probable serine/threonine-protein kinase RIO1 homolog (RIO1).